Reading from the N-terminus, the 351-residue chain is Ribosomal RNA small subunit methyltransferase H (351 aa).

Residues 48 to 50 (GGY), Asp-67, Phe-94, Asp-115, and Gln-122 each bind S-adenosyl-L-methionine. The tract at residues 274–351 (AAQASRHVPG…PAPQGRGPRR (78 aa)) is disordered.

It belongs to the methyltransferase superfamily. RsmH family.

It localises to the cytoplasm. It catalyses the reaction cytidine(1402) in 16S rRNA + S-adenosyl-L-methionine = N(4)-methylcytidine(1402) in 16S rRNA + S-adenosyl-L-homocysteine + H(+). Specifically methylates the N4 position of cytidine in position 1402 (C1402) of 16S rRNA. The polypeptide is Ribosomal RNA small subunit methyltransferase H (Methylorubrum extorquens (strain ATCC 14718 / DSM 1338 / JCM 2805 / NCIMB 9133 / AM1) (Methylobacterium extorquens)).